The following is a 554-amino-acid chain: (S)-1-hydroxy-N-methylcanadine 13-hydroxylase CYP82X2 (554 aa).

A helical transmembrane segment spans residues 23–43 (IISTFIVTIISIVFLYTVLLI). Position 494 (Cys-494) interacts with heme.

This sequence belongs to the cytochrome P450 family. Requires heme as cofactor. Highly expressed in capsules. Expressed is stems.

The protein localises to the membrane. It carries out the reaction (S)-1-hydroxy-N-methylcanadine + reduced [NADPH--hemoprotein reductase] + O2 = (13S,14R)-1,13-dihydroxy-N-methylcanadine + oxidized [NADPH--hemoprotein reductase] + H2O + H(+). It functions in the pathway alkaloid biosynthesis. Its function is as follows. Cytochrome P450 involved in the biosynthesis of the benzylisoquinoline alkaloid noscapine. Converts (S)-1-hydroxy-N-methylcanadine to (13S,14R)-1,13-dihydroxy-N-methylcanadine. The sequence is that of (S)-1-hydroxy-N-methylcanadine 13-hydroxylase CYP82X2 from Papaver somniferum (Opium poppy).